The following is a 240-amino-acid chain: 4-hydroxy-tetrahydrodipicolinate reductase (240 aa).

Residues 79–81 (ATT) and 103–106 (SANM) contribute to the NAD(+) site. Histidine 135 (proton donor/acceptor) is an active-site residue. Histidine 136 is a binding site for (S)-2,3,4,5-tetrahydrodipicolinate. Lysine 139 serves as the catalytic Proton donor. (S)-2,3,4,5-tetrahydrodipicolinate is bound at residue 145–146 (GT).

The protein belongs to the DapB family.

The protein resides in the cytoplasm. It carries out the reaction (S)-2,3,4,5-tetrahydrodipicolinate + NAD(+) + H2O = (2S,4S)-4-hydroxy-2,3,4,5-tetrahydrodipicolinate + NADH + H(+). The catalysed reaction is (S)-2,3,4,5-tetrahydrodipicolinate + NADP(+) + H2O = (2S,4S)-4-hydroxy-2,3,4,5-tetrahydrodipicolinate + NADPH + H(+). It participates in amino-acid biosynthesis; L-lysine biosynthesis via DAP pathway; (S)-tetrahydrodipicolinate from L-aspartate: step 4/4. Catalyzes the conversion of 4-hydroxy-tetrahydrodipicolinate (HTPA) to tetrahydrodipicolinate. The polypeptide is 4-hydroxy-tetrahydrodipicolinate reductase (Staphylococcus aureus (strain MSSA476)).